The following is a 483-amino-acid chain: tRNA (guanine(37)-N(1))-methyltransferase (483 aa).

The segment at 1–24 is disordered; that stretch reads MEEAATLQSLSISSSSPFPNNSSP. A compositionally biased stretch (low complexity) spans 9-24; the sequence is SLSISSSSPFPNNSSP. Residues H252, 290-291, and N379 contribute to the S-adenosyl-L-methionine site; that span reads DL.

It belongs to the class I-like SAM-binding methyltransferase superfamily. TRM5/TYW2 family. Monomer.

The protein localises to the mitochondrion matrix. Its subcellular location is the nucleus. It localises to the cytoplasm. It catalyses the reaction guanosine(37) in tRNA + S-adenosyl-L-methionine = N(1)-methylguanosine(37) in tRNA + S-adenosyl-L-homocysteine + H(+). Specifically methylates the N1 position of guanosine-37 in various cytoplasmic and mitochondrial tRNAs. Methylation is not dependent on the nature of the nucleoside 5' of the target nucleoside. This is the first step in the biosynthesis of wybutosine (yW), a modified base adjacent to the anticodon of tRNAs and required for accurate decoding. The chain is tRNA (guanine(37)-N(1))-methyltransferase from Ajellomyces capsulatus (strain G186AR / H82 / ATCC MYA-2454 / RMSCC 2432) (Darling's disease fungus).